Here is a 397-residue protein sequence, read N- to C-terminus: Acetate kinase (397 aa).

Residue Asn-8 coordinates Mg(2+). An ATP-binding site is contributed by Lys-15. Residue Arg-89 coordinates substrate. Asp-146 serves as the catalytic Proton donor/acceptor. Residues 206 to 210 (HLGNG), 281 to 283 (DLR), and 329 to 333 (GVGEN) contribute to the ATP site. Glu-382 lines the Mg(2+) pocket.

The protein belongs to the acetokinase family. As to quaternary structure, homodimer. It depends on Mg(2+) as a cofactor. The cofactor is Mn(2+).

Its subcellular location is the cytoplasm. It carries out the reaction acetate + ATP = acetyl phosphate + ADP. The protein operates within metabolic intermediate biosynthesis; acetyl-CoA biosynthesis; acetyl-CoA from acetate: step 1/2. Functionally, catalyzes the formation of acetyl phosphate from acetate and ATP. Can also catalyze the reverse reaction. The chain is Acetate kinase from Bacillus cereus (strain ATCC 10987 / NRS 248).